A 271-amino-acid polypeptide reads, in one-letter code: MKMFNNIKNTGKLIRLERIFDKKSEKTVIIPMDHGVSSGPVAGLKDMRTAINSVAEGGANSVLVHKGIVRHGHRGYGKDIGLIIHLSAGTGVSPDPNEKVIVTSVEEAIRMGADAVSVHVNMGAPTDCQMYQDLGKIAETCEYWGMPLIAMMYPRGEKITDEKDPEFVAHAARLGAELGADIIKTNYTGDIDSFKDVVKGCPAPIIIAGGAKSTDAEYLQMVKDSIEAGGAGVASGRNVFQHKDVIGITKATAMVVHENADVEEALKVIKK.

Aspartate 33 (proton acceptor) is an active-site residue. Residues 33–37 (DHGVS) and 153–155 (YPR) contribute to the 1-deoxy-D-threo-hexo-2,5-diulose 6-phosphate site. The Proton donor role is filled by tyrosine 153. Lysine 184 functions as the Schiff-base intermediate with substrate in the catalytic mechanism. 1-deoxy-D-threo-hexo-2,5-diulose 6-phosphate is bound by residues 209-210 (GG) and 236-237 (GR).

The protein belongs to the DeoC/FbaB aldolase family. ADHS subfamily. Homodecamer.

It carries out the reaction 1-deoxy-D-threo-hexo-2,5-diulose 6-phosphate + L-aspartate 4-semialdehyde = 2,3-dioxopropyl phosphate + 2-amino-2,3,7-trideoxy-D-lyxo-hept-6-ulosonate. Catalyzes a transaldol reaction between 6-deoxy-5-ketofructose 1-phosphate (DKFP) and L-aspartate semialdehyde (ASA) with an elimination of hydroxypyruvaldehyde phosphate to yield 2-amino-3,7-dideoxy-D-threo-hept-6-ulosonate (ADH). Plays a key role in an alternative pathway of the biosynthesis of 3-dehydroquinate (DHQ), which is involved in the canonical pathway for the biosynthesis of aromatic amino acids. The protein is 2-amino-3,7-dideoxy-D-threo-hept-6-ulosonate synthase of Methanococcus aeolicus (strain ATCC BAA-1280 / DSM 17508 / OCM 812 / Nankai-3).